Reading from the N-terminus, the 385-residue chain is Protein pelota homolog (385 aa).

Lys-162 is covalently cross-linked (Glycyl lysine isopeptide (Lys-Gly) (interchain with G-Cter in SUMO2)). A phosphoserine mark is found at Ser-374, Ser-380, Ser-381, and Ser-382.

Belongs to the eukaryotic release factor 1 family. Pelota subfamily. In terms of assembly, component of the Pelota-HBS1L complex, also named Dom34-Hbs1 complex, composed of PELO and HBS1L. Interacts with PINK1. Interacts with ABCE1. Interacts with CNOT4. A divalent metal cation is required as a cofactor.

The protein localises to the cytoplasm. Functionally, component of the Pelota-HBS1L complex, a complex that recognizes stalled ribosomes and triggers the No-Go Decay (NGD) pathway. In the Pelota-HBS1L complex, PELO recognizes ribosomes stalled at the 3' end of an mRNA and engages stalled ribosomes by destabilizing mRNA in the mRNA channel. Following mRNA extraction from stalled ribosomes by the SKI complex, the Pelota-HBS1L complex promotes recruitment of ABCE1, which drives the disassembly of stalled ribosomes, followed by degradation of damaged mRNAs as part of the NGD pathway. As part of the PINK1-regulated signaling, upon mitochondrial damage is recruited to the ribosome/mRNA-ribonucleoprotein complex associated to mitochondrial outer membrane thereby enabling the recruitment of autophagy receptors and induction of mitophagy. The protein is Protein pelota homolog (Pelo) of Rattus norvegicus (Rat).